We begin with the raw amino-acid sequence, 89 residues long: Small ribosomal subunit protein uS15 (89 aa).

Belongs to the universal ribosomal protein uS15 family. In terms of assembly, part of the 30S ribosomal subunit. Forms a bridge to the 50S subunit in the 70S ribosome, contacting the 23S rRNA.

Functionally, one of the primary rRNA binding proteins, it binds directly to 16S rRNA where it helps nucleate assembly of the platform of the 30S subunit by binding and bridging several RNA helices of the 16S rRNA. In terms of biological role, forms an intersubunit bridge (bridge B4) with the 23S rRNA of the 50S subunit in the ribosome. The sequence is that of Small ribosomal subunit protein uS15 from Anaeromyxobacter sp. (strain Fw109-5).